Consider the following 1774-residue polypeptide: Collagen alpha-1(XVIII) chain (1774 aa).

Residues 1–26 (MAPDPSRRLCLLLLLLLSCRLVPASA) form the signal peptide. The tract at residues 27 to 785 (DGNSLSPLNP…QNPGRGLIKG (759 aa)) is nonhelical region 1 (NC1). 2 disordered regions span residues 47–113 (DSLE…TPAV) and 218–269 (LPPF…LEGK). Polar residues-rich tracts occupy residues 55–87 (KPQN…TPAS) and 244–256 (LSSS…SWGN). Residues Asn354 and Asn361 are each glycosylated (N-linked (GlcNAc...) asparagine). The FZ domain occupies 365–482 (TSTSRCLPLP…SQEDGYCVFI (118 aa)). 5 disulfides stabilise this stretch: Cys370–Cys433, Cys380–Cys426, Cys417–Cys455, Cys444–Cys479, and Cys448–Cys468. The Laminin G-like domain maps to 522–704 (GPDSNSGQVA…EDRASGDFGS (183 aa)). The N-linked (GlcNAc...) asparagine glycan is linked to Asn585. A disordered region spans residues 681 to 1458 (RVSPVHCLDE…PPGPPGAMGA (778 aa)). A compositionally biased stretch (basic and acidic residues) spans 708 to 717 (ESSKSHKEDT). Residue Thr730 is modified to Phosphothreonine. The interval 786 to 812 (GMKGQKGEPGAQGPPGPAGPQGPAGPV) is triple-helical region 1 (COL1). Positions 809–824 (AGPVVQSPNSQPVPGA) are enriched in low complexity. The tract at residues 813–822 (VQSPNSQPVP) is nonhelical region 2 (NC2). The Collagen-like 1 domain occupies 823–878 (GAQGPPGPQGPPGKDGTPGRDGEPGDPGEDGRPGDTGPQGFPGTPGDVGPKGEKGD). Residues 823-896 (GAQGPPGPQG…PGPPGPPGPS (74 aa)) are triple-helical region 2 (COL2). Positions 839–855 (TPGRDGEPGDPGEDGRP) are enriched in basic and acidic residues. A compositionally biased stretch (pro residues) spans 884–895 (RGPPGPPGPPGP). The interval 897-920 (FRQDKLTFIDMEGSGFSGDIESLR) is nonhelical region 3 (NC3). A glycan (O-linked (Xyl...) (chondroitin sulfate) serine) is linked at Ser910. Residues 921-1042 (GPRGFPGPPG…PGPPGPPGPG (122 aa)) form a triple-helical region 3 (COL3) region. The segment covering 925 to 935 (FPGPPGPPGVP) has biased composition (pro residues). An N-linked (GlcNAc...) asparagine glycan is attached at Asn947. The segment covering 951-963 (APGPAGLPGVPGK) has biased composition (low complexity). Collagen-like domains lie at 953-1007 (GPAG…GSKG) and 1008-1041 (DLGP…PPGP). 2 stretches are compositionally biased toward pro residues: residues 967–982 (PGFP…PGKE) and 1026–1041 (PVGP…PPGP). Positions 1043-1065 (FAAGFDDMEGSGIPLWTTARSSD) are nonhelical region 4 (NC4). Collagen-like domains follow at residues 1066 to 1117 (GLQG…GPKG), 1118 to 1147 (EKGM…PPGP), 1162 to 1202 (PGPE…GEPG), and 1216 to 1264 (QKGA…EPGD). Residues 1066–1148 (GLQGPPGSPG…PGPPGPPGPV (83 aa)) are triple-helical region 4 (COL4). Residues 1138 to 1147 (LPGPPGPPGP) show a composition bias toward pro residues. The tract at residues 1149–1162 (IYVSSEDKAIVSTP) is nonhelical region 5 (NC5). The tract at residues 1163 to 1204 (GPEGKPGYAGFPGPAGPKGDLGSKGEQGLPGPKGEKGEPGTI) is triple-helical region 5 (COL5). The interval 1205-1217 (FSPDGRALGHPQK) is nonhelical region 6 (NC6). Residues 1218 to 1290 (GAKGEPGFRG…PGPPGPPGMP (73 aa)) are triple-helical region 6 (COL6). Pro residues predominate over residues 1275-1289 (PGPPGPPGPPGPPGM). Positions 1291 to 1300 (IYDSNAFVES) are nonhelical region 7 (NC7). The span at 1301–1317 (GRPGLPGQQGVQGPSGP) shows a compositional bias: low complexity. A triple-helical region 7 (COL7) region spans residues 1301–1333 (GRPGLPGQQGVQGPSGPKGDKGEVGPPGPPGQF). A nonhelical region 8 (NC8) region spans residues 1334–1345 (PIDLFHLEAEMK). The segment covering 1338-1362 (FHLEAEMKGDKGDRGDAGQKGERGE) has biased composition (basic and acidic residues). Residues 1346 to 1369 (GDKGDRGDAGQKGERGEPGAPGGG) form a triple-helical region 8 (COL8) region. Positions 1351–1353 (RGD) match the Cell attachment site motif. The segment at 1370-1376 (FFSSSVP) is nonhelical region 9 (NC9). 4 stretches are compositionally biased toward pro residues: residues 1376–1388 (PGPP…PGIP), 1398–1407 (PPGPPGPQGP), 1418–1431 (PPGP…PSFP), and 1441–1453 (PGPP…PGPP). The triple-helical region 9 (COL9) stretch occupies residues 1377–1428 (GPPGPPGYPGIPGPKGESIRGPPGPPGPQGPPGIGYEGRQGPPGPPGPPGPP). Positions 1429-1441 (SFPGPHRQTVSVP) are nonhelical region 10 (NC10). The tract at residues 1442-1459 (GPPGPPGPPGPPGAMGAS) is triple-helical region 10 (COL10). The segment at 1460–1774 (AGQVRIWATY…ENSFMTSFSK (315 aa)) is nonhelical region 11 (NC11). The interval 1474–1519 (DKIREVPEGWLIFVAEREELYVRVRNGFRKVLLEARTALPRGTGNE) is non-collagenous domain 1 association domain. The interval 1520 to 1590 (VAALQPPLVQ…PPARPTLSLA (71 aa)) is non-collagenous domain 1 hinge region. Positions 1591, 1593, 1595, 1601, and 1666 each coordinate Zn(2+). Cystine bridges form between Cys1623-Cys1763 and Cys1725-Cys1755.

This sequence belongs to the multiplexin collagen family. Forms homotrimers. Recombinant non-collagenous domain 1 has stronger affinity to NID1, HSPG2 and laminin-1:NID1 complex and lower affinity to FBLN1 and FBLN2 than endostatin. In terms of assembly, monomeric. Interacts with KDR/VEGFR2. Interacts with the ITGA5:ITGB1 complex. Interacts with NID1, HSPG2, laminin-1:NID1 complex, FBLN1 and FBLN2. In terms of processing, prolines at the third position of the tripeptide repeating unit (G-X-Y) of the triple-helical regions are hydroxylated. Post-translationally, undergoes proteolytic processing by CTSL/cathepsin-L and elastase-like proteases to generate both non-collagenous domain 1 trimers and endostatin monomers. In tissue extracts (brain, skeletal muscle, heart, kidney, testis and liver) predominantly bands of approximately 38 kDa are detected; recombinant non-collagenous domain 1 shows similar mobility. In vitro, several proteolytic cleavage sites in the non-collagenous domain 1 hinge region generating different endostatin-like peptides are reported. In terms of tissue distribution, expressed in liver, kidney, lung, skeletal muscle and testis.

Its subcellular location is the secreted. It localises to the extracellular space. It is found in the extracellular matrix. The protein localises to the basement membrane. Its function is as follows. Probably plays a major role in determining the retinal structure as well as in the closure of the neural tube. Functionally, may regulate extracellular matrix-dependent motility and morphogenesis of endothelial and non-endothelial cells; the function requires homotrimerization and implicates MAPK signaling. Potently inhibits endothelial cell proliferation and angiogenesis. May inhibit angiogenesis by binding to the heparan sulfate proteoglycans involved in growth factor signaling. Inhibits VEGFA isoform VEGF165-induced endothelial cell proliferation and migration. Seems to inhibit VEGFA-mediated signaling by blocking the interaction of VEGFA to its receptor KDR/VEGFR2. Modulates endothelial cell migration in an integrin-dependent manner implicating integrin ITGA5:ITGB1 and to a lesser extent ITGAV:ITGB3 and ITGAV:ITGB5. May negatively regulate the activity of homotrimeric non-collagenous domain 1. The sequence is that of Collagen alpha-1(XVIII) chain from Mus musculus (Mouse).